Consider the following 391-residue polypeptide: Adaptive-response sensory kinase SasA (391 aa).

The region spanning 169–391 (MLAHDLRSPL…CFHFTLPVCR (223 aa)) is the Histidine kinase domain. Histidine 172 carries the post-translational modification Phosphohistidine; by autocatalysis.

Homooligomerizes. Interacts with KaiC. Participates in the KaiABC clock complex, whose core is composed of a KaiC homohexamer, 6 KaiB and up to 6 KaiA dimers. SasA and KaiB(fs) compete to bind to KaiC.

It catalyses the reaction ATP + protein L-histidine = ADP + protein N-phospho-L-histidine.. Member of the two-component regulatory system SasA/RpaA involved in genome-wide circadian gene expression. One of several clock output pathways. Participates in the Kai clock protein complex, the main circadian regulator in cyanobacteria, via its interaction with KaiC. KaiC enhances the autophosphorylation activity of SasA, which then transfers its phosphate group to RpaA to activate it. In addition to its output function, recruits fold-shifted KaiB (KaiB(fs)) to KaiC to cooperatively form the KaiB(6):KaiC(6) complex (independent of SasA kinase activity). Required for robustness of the circadian rhythm of gene expression and is involved in clock output, also required for adaptation to light/dark cycles. This is Adaptive-response sensory kinase SasA from Rippkaea orientalis (strain PCC 8801 / RF-1) (Cyanothece sp. (strain PCC 8801)).